The primary structure comprises 188 residues: Elongation factor P (188 aa).

Lys-34 bears the N6-(3,6-diaminohexanoyl)-5-hydroxylysine mark.

Belongs to the elongation factor P family. May be beta-lysylated on the epsilon-amino group of Lys-34 by the combined action of EpmA and EpmB, and then hydroxylated on the C5 position of the same residue by EpmC (if this protein is present). Lysylation is critical for the stimulatory effect of EF-P on peptide-bond formation. The lysylation moiety may extend toward the peptidyltransferase center and stabilize the terminal 3-CCA end of the tRNA. Hydroxylation of the C5 position on Lys-34 may allow additional potential stabilizing hydrogen-bond interactions with the P-tRNA.

Its subcellular location is the cytoplasm. It participates in protein biosynthesis; polypeptide chain elongation. Functionally, involved in peptide bond synthesis. Alleviates ribosome stalling that occurs when 3 or more consecutive Pro residues or the sequence PPG is present in a protein, possibly by augmenting the peptidyl transferase activity of the ribosome. Modification of Lys-34 is required for alleviation. The protein is Elongation factor P of Haemophilus influenzae (strain 86-028NP).